Consider the following 342-residue polypeptide: uncharacterized protein (342 aa).

The protein belongs to the cycloisomerase 2 family.

This is an uncharacterized protein from Staphylococcus aureus (strain bovine RF122 / ET3-1).